The chain runs to 490 residues: MNAPVNPKKLIKGALGDWEVVIGMEIHAQVTSRSKLFSGASTAFGAEPNDNVSLVDAAMPGMLPVINRECVAQAVRTGLGLKAQINHRSVFDRKNYFYPDLPQGYQISQYKSPIVGEGEVLVDLPEGETIRVGIERLHLEQDAGKSLHDQHPSLSFVDLNRSGVALMEIVSKPDLRSAEEAKAYVTKLRTILRYLGTCDGDMEKGNLRADVNVSVRRPGEFLGTRCEIKNVNSIRFIGQAIEAEARRQIAILEDGGVIEQETRLFDPNKGETRSMRSKEEAHDYRYFPDPDLLPLEIDDAFIDELKTELPELPDTKKARFVAEYGLSAYDATVLVAERASADYFEAVARGRDGKAAANWVINELFGRLNKEGHGIEDSPVSAEQLGAIIDLIADGTISGKIAKDLFEIVWSEGGDPRAIVESRGLRQVTDTGAIEAAVDQIIAANPDKVVQAQAKPTLLGWFVGQTMKATGGKANPAAVNALLKAKLGIE.

Belongs to the GatB/GatE family. GatB subfamily. Heterotrimer of A, B and C subunits.

It catalyses the reaction L-glutamyl-tRNA(Gln) + L-glutamine + ATP + H2O = L-glutaminyl-tRNA(Gln) + L-glutamate + ADP + phosphate + H(+). The catalysed reaction is L-aspartyl-tRNA(Asn) + L-glutamine + ATP + H2O = L-asparaginyl-tRNA(Asn) + L-glutamate + ADP + phosphate + 2 H(+). Functionally, allows the formation of correctly charged Asn-tRNA(Asn) or Gln-tRNA(Gln) through the transamidation of misacylated Asp-tRNA(Asn) or Glu-tRNA(Gln) in organisms which lack either or both of asparaginyl-tRNA or glutaminyl-tRNA synthetases. The reaction takes place in the presence of glutamine and ATP through an activated phospho-Asp-tRNA(Asn) or phospho-Glu-tRNA(Gln). The protein is Aspartyl/glutamyl-tRNA(Asn/Gln) amidotransferase subunit B of Methylobacterium nodulans (strain LMG 21967 / CNCM I-2342 / ORS 2060).